Reading from the N-terminus, the 699-residue chain is Elongation factor G (699 aa).

In terms of domain architecture, tr-type G spans 8–283 (EHIRNIGICA…AVVYFLPSPI (276 aa)). Residues 17–24 (AHIDAGKT), 81–85 (DTPGH), and 135–138 (NKMD) each bind GTP.

The protein belongs to the TRAFAC class translation factor GTPase superfamily. Classic translation factor GTPase family. EF-G/EF-2 subfamily.

It localises to the cytoplasm. Its function is as follows. Catalyzes the GTP-dependent ribosomal translocation step during translation elongation. During this step, the ribosome changes from the pre-translocational (PRE) to the post-translocational (POST) state as the newly formed A-site-bound peptidyl-tRNA and P-site-bound deacylated tRNA move to the P and E sites, respectively. Catalyzes the coordinated movement of the two tRNA molecules, the mRNA and conformational changes in the ribosome. The sequence is that of Elongation factor G from Rickettsia akari (strain Hartford).